The primary structure comprises 340 residues: MQGLNPFHRDQGAGGRPAPVRPAPARPAPVAPRTPRKDPAPSRLAYRLNRMMLRPLVRRLVHVGLPAFLAALVAGIWLSDDTRRANLTGGIDAIVDRIQHRDEFMVKMMTIEGASPVVDKGLRAMLPVELPASSFEIDLEKLRERVLKLDAVETVDLRIKPGGVLSAVVTERVPVVLWRHARGIELLDKTGHRVASVTSREVRGDLPIIAGEGADRAAPEALALIDAAGPILPRLRGLERMGERRWDVVLDHGQRIKLPEDKALQALERAIALNGALHMLDRDISVVDLRQEARPVVRLGLEAQNAIRQARGQPELGPDGTPLAPEATAGNAAKAKKKSG.

A disordered region spans residues methionine 1–proline 41. The Cytoplasmic segment spans residues methionine 1–proline 55. A compositionally biased stretch (pro residues) spans proline 19–proline 32. The chain crosses the membrane as a helical span at residues leucine 56–leucine 78. At serine 79–glycine 340 the chain is on the periplasmic side. The 69-residue stretch at phenylalanine 104 to arginine 172 folds into the POTRA domain. The disordered stretch occupies residues arginine 308–glycine 340. Residues alanine 324–alanine 333 show a composition bias toward low complexity.

Belongs to the FtsQ/DivIB family. FtsQ subfamily.

The protein localises to the cell inner membrane. Essential cell division protein. The protein is Cell division protein FtsQ of Paracoccus denitrificans (strain Pd 1222).